The primary structure comprises 517 residues: Phenol 2-monooxygenase, oxygenase component DmpN (517 aa).

Fe cation contacts are provided by E109, E139, H142, E200, E234, and H237.

The protein belongs to the TmoA/XamoA family. As to quaternary structure, the multicomponent enzyme phenol hydroxylase is formed by DmpL (P1 component), DmpM (P2 component), DmpN (P3 component), DmpO (P4 component) and DmpP (P5 component). The oxygenase component is a dimer composed of three subunits, DmpL, DmpN and DmpO (DmpLNO). DmpN interacts with the auxiliary protein DmpK (P0 component). The cofactor is Fe(2+).

The catalysed reaction is phenol + NADH + O2 + H(+) = catechol + NAD(+) + H2O. It functions in the pathway aromatic compound metabolism; phenol degradation. Its activity is regulated as follows. Requires DmpM for efficient turnover. The activity of DmpLNO oxygenase is inhibited by dithiothreitol (DTT) by a mechanism apparently involving H(2)O(2) generation. Functionally, part of a multicomponent enzyme which catalyzes the degradation of phenol and some of its methylated derivatives. DmpL, DmpN and DmpO form the oxygenase component of the complex. Required for growth on phenol and for in vitro phenol hydroxylase activity. The polypeptide is Phenol 2-monooxygenase, oxygenase component DmpN (Pseudomonas sp. (strain CF600)).